The primary structure comprises 81 residues: ATP synthase subunit c, chloroplastic (81 aa).

Transmembrane regions (helical) follow at residues 4 to 24 (VISA…SIGP) and 57 to 77 (LAFM…LLFA).

The protein belongs to the ATPase C chain family. As to quaternary structure, F-type ATPases have 2 components, F(1) - the catalytic core - and F(0) - the membrane proton channel. F(1) has five subunits: alpha(3), beta(3), gamma(1), delta(1), epsilon(1). F(0) has four main subunits: a(1), b(1), b'(1) and c(10-14). The alpha and beta chains form an alternating ring which encloses part of the gamma chain. F(1) is attached to F(0) by a central stalk formed by the gamma and epsilon chains, while a peripheral stalk is formed by the delta, b and b' chains.

Its subcellular location is the plastid. The protein localises to the chloroplast thylakoid membrane. F(1)F(0) ATP synthase produces ATP from ADP in the presence of a proton or sodium gradient. F-type ATPases consist of two structural domains, F(1) containing the extramembraneous catalytic core and F(0) containing the membrane proton channel, linked together by a central stalk and a peripheral stalk. During catalysis, ATP synthesis in the catalytic domain of F(1) is coupled via a rotary mechanism of the central stalk subunits to proton translocation. In terms of biological role, key component of the F(0) channel; it plays a direct role in translocation across the membrane. A homomeric c-ring of between 10-14 subunits forms the central stalk rotor element with the F(1) delta and epsilon subunits. This Zygnema circumcarinatum (Green alga) protein is ATP synthase subunit c, chloroplastic.